The chain runs to 161 residues: Large ribosomal subunit protein uL15 (161 aa).

The interval 1–39 (MTKLNELAPREGSTKGRMRVGRGPGSGKGKTAGRGVKGQ) is disordered. Over residues 22–36 (RGPGSGKGKTAGRGV) the composition is skewed to gly residues.

The protein belongs to the universal ribosomal protein uL15 family. Part of the 50S ribosomal subunit.

Functionally, binds to the 23S rRNA. The polypeptide is Large ribosomal subunit protein uL15 (Caulobacter vibrioides (strain ATCC 19089 / CIP 103742 / CB 15) (Caulobacter crescentus)).